A 77-amino-acid polypeptide reads, in one-letter code: Conotoxin PnMKLT1-0122 (77 aa).

The signal sequence occupies residues 1-22 (MKLTCMMIVAVLFLTAWTFATA). Positions 23–49 (EDPRNGLENLFSKAHHEMKNPEDSKLN) are excised as a propeptide. Disulfide bonds link cysteine 52–cysteine 67, cysteine 59–cysteine 71, and cysteine 66–cysteine 76.

The protein belongs to the conotoxin O1 superfamily. As to expression, expressed by the venom duct.

It is found in the secreted. The protein is Conotoxin PnMKLT1-0122 of Conus pennaceus (Feathered cone).